Here is a 728-residue protein sequence, read N- to C-terminus: MSMFNKVVKQFQWGQHTVRMETGEIARQAGGAVIVDVEDTVVLATVVAAKSPKPGQDFFPLTVDYIEKTYAAGKIPGGFFKREGRPSENETLTSRLIDRPLRPLFPEGFYNDVQVVVHVVSLNPEIPADIPALIGASAALAVSGIPFNGPVGAARIGYKDGQYLLNPTRSQMATSDLDLVVAGTERAVLMVESEANQLSEDVMLGAVVYGHEQMQIAINAIHDLVREGGKPEWDWAPAPKNEALIAKVTEVALPLLQEAYQLRQKSARSQKLKEVSANVTAALAEAGVDADKVEVGNIMFDLEAKIVRGQILGGEPRIDGRDTRTVRPIEIRSSVLPRAHGSALFTRGETQALVVATLGTKSDEQIIDALAGEYRDRFMLHYNMPPFATGETGRVGSPKRREIGHGRLAKRALIPVLPKDDEFAYTIRLVSEITESNGSSSMASVCGGCLALMDAGVPVKAHVAGVAMGLILEGNKFAVLTDILGDEDHLGDMDFKVAGTDNGITALQMDIKVQGITKEIMQVALAQAKEGRLHILGAMQGAMGHARTELSAHAPRMITMKIHPDKIREVIGKGGSTIQALTKETGTTIDIQEDGTITIASTSTDGMAEAKRRIEGITAEAEVGKIYNGTVLKLLDFGAIVNILPGKDGLLHISEIVNERVKDIKDWLKEGQQLRVKLIQADEKGRLRLSLKAALAEEGGSISPVNAGEAAPAPAPAAAPATPSDQQQ.

Mg(2+) contacts are provided by Asp488 and Asp494. The KH domain occupies 555-614; it reads PRMITMKIHPDKIREVIGKGGSTIQALTKETGTTIDIQEDGTITIASTSTDGMAEAKRRI. Positions 624–692 constitute an S1 motif domain; sequence GKIYNGTVLK…EKGRLRLSLK (69 aa). The segment at 702-728 is disordered; that stretch reads ISPVNAGEAAPAPAPAAAPATPSDQQQ. A compositionally biased stretch (low complexity) spans 710-721; it reads AAPAPAPAAAPA.

It belongs to the polyribonucleotide nucleotidyltransferase family. The cofactor is Mg(2+).

It localises to the cytoplasm. The enzyme catalyses RNA(n+1) + phosphate = RNA(n) + a ribonucleoside 5'-diphosphate. Its function is as follows. Involved in mRNA degradation. Catalyzes the phosphorolysis of single-stranded polyribonucleotides processively in the 3'- to 5'-direction. This chain is Polyribonucleotide nucleotidyltransferase, found in Cupriavidus pinatubonensis (strain JMP 134 / LMG 1197) (Cupriavidus necator (strain JMP 134)).